The chain runs to 338 residues: mRNA decay activator protein ZFP36L1 (338 aa).

The interval 1–111 (MTTTLVSATI…QKQPGSGQVN (111 aa)) is necessary and sufficient for the association with mRNA decay enzymes and mRNA decay activation. Phosphoserine; by MAPKAPK2 is present on Ser54. At Ser90 the chain carries Phosphoserine; by PKB/AKT1. Position 92 is a phosphoserine; by PKB/AKT1 and MAPKAPK2 (Ser92). A disordered region spans residues 93–113 (EGGERLLPTQKQPGSGQVNSS). A compositionally biased stretch (polar residues) spans 101–113 (TQKQPGSGQVNSS). 2 C3H1-type zinc fingers span residues 114–142 (RYKT…HGIH) and 152–180 (KYKT…HNAE). Residues 185-338 (LAGGRDLSAD…IFSRLSISDD (154 aa)) form a necessary for mRNA decay activation region. At Ser203 the chain carries Phosphoserine; by PKB/AKT1 and MAPKAPK2. The interval 273-338 (SPTTFLFRPM…IFSRLSISDD (66 aa)) is disordered. Residues 305–318 (YLSSSSSSHSGSDS) show a composition bias toward low complexity. Ser318 is modified (phosphoserine). Position 334 is a phosphoserine; by RPS6KA1 (Ser334).

Associates with the cytoplasmic CCR4-NOT deadenylase and RNA exosome complexes to trigger ARE-containing mRNA deadenylation and decay processes. Interacts with CNOT1. Interacts (via N-terminus) with CNOT6. Interacts with CNOT7; this interaction is inhibited in response to phorbol 12-myristate 13-acetate (PMA) treatment in a p38 MAPK-dependent manner. Interacts with DCP1A. Interacts (via N-terminus) with DCP2. Interacts (via N-terminus) with EXOSC2. Interacts with XRN1. Interacts (via phosphorylated form) with YWHAB; this interaction occurs in a protein kinase AKT1-dependent manner. Interacts (via phosphorylated form) with YWHAZ; this interaction occurs in a p38 MAPK- and AKT-signaling pathways. Phosphorylated. Phosphorylated by RPS6KA1 at Ser-334 upon phorbol 12-myristate 13-acetate (PMA) treatment; this phosphorylation results in dissociation of the CCR4-NOT deadenylase complex and induces p38 MAPK-mediated stabilization of the low-density lipoprotein receptor LDLR mRNA. Phosphorylated by protein kinase AKT1 at Ser-92 and Ser-203 in response to insulin; these phosphorylations stabilize ZFP36L1, increase the association with 14-3-3 proteins and mediate ARE-containing mRNA stabilization. AKT1-mediated phosphorylation at Ser-92 does not impair ARE-containing RNA-binding. Phosphorylated at Ser-54, Ser-92 and Ser-203 by MAPKAPK2; these phosphorylations increase the association with 14-3-3 proteins and mediate ARE-containing mRNA stabilization in a protein kinase AKT1-independent manner. MAPKAPK2-mediated phosphorylations at Ser-54, Ser-92 and Ser-203 do not impair ARE-containing RNA-binding. Phosphorylations increase the association with 14-3-3 proteins and mediate ARE-containing mRNA stabilization during early adipogenesis in a p38 MAPK- and AKT-dependent manner. Phosphorylated by protein kinase AKT1 at Ser-92. Post-translationally, ubiquitinated. Ubiquitination leads to proteasomal degradation, a process inhibited by phosphorylations at Ser-90, Ser-92 and Ser-203.

It localises to the nucleus. The protein localises to the cytoplasm. Its subcellular location is the cytoplasmic granule. The protein resides in the P-body. Functionally, zinc-finger RNA-binding protein that destabilizes several cytoplasmic AU-rich element (ARE)-containing mRNA transcripts by promoting their poly(A) tail removal or deadenylation, and hence provide a mechanism for attenuating protein synthesis. Acts as a 3'-untranslated region (UTR) ARE mRNA-binding adapter protein to communicate signaling events to the mRNA decay machinery. Functions by recruiting the CCR4-NOT deadenylase complex and components of the cytoplasmic RNA decay machinery to the bound ARE-containing mRNAs, and hence promotes ARE-mediated mRNA deadenylation and decay processes. Also induces the degradation of ARE-containing mRNAs even in absence of poly(A) tail. Binds to 3'-UTR ARE of numerous mRNAs. Positively regulates early adipogenesis by promoting ARE-mediated mRNA decay of immediate early genes (IEGs). Promotes ARE-mediated mRNA decay of mineralocorticoid receptor NR3C2 mRNA in response to hypertonic stress. Negatively regulates hematopoietic/erythroid cell differentiation by promoting ARE-mediated mRNA decay of the transcription factor STAT5B mRNA. Positively regulates monocyte/macrophage cell differentiation by promoting ARE-mediated mRNA decay of the cyclin-dependent kinase CDK6 mRNA. Promotes degradation of ARE-containing pluripotency-associated mRNAs in embryonic stem cells (ESCs), such as NANOG, through a fibroblast growth factor (FGF)-induced MAPK-dependent signaling pathway, and hence attenuates ESC self-renewal and positively regulates mesendoderm differentiation. May play a role in mediating pro-apoptotic effects in malignant B-cells by promoting ARE-mediated mRNA decay of BCL2 mRNA. In association with ZFP36L2 maintains quiescence on developing B lymphocytes by promoting ARE-mediated decay of several mRNAs encoding cell cycle regulators that help B cells progress through the cell cycle, and hence ensuring accurate variable-diversity-joining (VDJ) recombination and functional immune cell formation. Together with ZFP36L2 is also necessary for thymocyte development and prevention of T-cell acute lymphoblastic leukemia (T-ALL) transformation by promoting ARE-mediated mRNA decay of the oncogenic transcription factor NOTCH1 mRNA. Participates in the delivery of target ARE-mRNAs to processing bodies (PBs). In addition to its cytosolic mRNA-decay function, plays a role in the regulation of nuclear mRNA 3'-end processing; modulates mRNA 3'-end maturation efficiency of the DLL4 mRNA through binding with an ARE embedded in a weak noncanonical polyadenylation (poly(A)) signal in endothelial cells. Also involved in the regulation of stress granule (SG) and P-body (PB) formation and fusion. Plays a role in vasculogenesis and endocardial development. Plays a role in the regulation of keratinocyte proliferation, differentiation and apoptosis. Plays a role in myoblast cell differentiation. This Rattus norvegicus (Rat) protein is mRNA decay activator protein ZFP36L1.